A 122-amino-acid chain; its full sequence is Protein TCL1B3 (122 aa).

The protein belongs to the TCL1 family.

In Mus musculus (Mouse), this protein is Protein TCL1B3 (Tcl1b3).